The following is a 229-amino-acid chain: Ribosome maturation factor RimM (229 aa).

The tract at residues 1 to 37 (MAGHDSGNAKRGRSPSFGVFVRKPVERTSAKGTSDGA) is disordered. The PRC barrel domain maps to 148–229 (ADEFYWVDLI…RVVVDWEADY (82 aa)).

This sequence belongs to the RimM family. Binds ribosomal protein uS19.

It localises to the cytoplasm. An accessory protein needed during the final step in the assembly of 30S ribosomal subunit, possibly for assembly of the head region. Essential for efficient processing of 16S rRNA. May be needed both before and after RbfA during the maturation of 16S rRNA. It has affinity for free ribosomal 30S subunits but not for 70S ribosomes. This Burkholderia pseudomallei (strain 668) protein is Ribosome maturation factor RimM.